Consider the following 137-residue polypeptide: Pro-corazonin (137 aa).

The first 20 residues, 1–20, serve as a signal peptide directing secretion; it reads MKHVFSTSLIVSLFVIFTDA. A Pyrrolidone carboxylic acid modification is found at Gln-21. An Asparagine amide modification is found at Asn-31. A propeptide spanning residues 68-137 is cleaved from the precursor; it reads FLKSPCDVRL…RLLNDGMHRL (70 aa).

Belongs to the corazonin family.

The protein resides in the secreted. Functionally, cardioactive peptide. Corazonin is probably involved in the physiological regulation of the heart beat. The sequence is that of Pro-corazonin from Aedes aegypti (Yellowfever mosquito).